Consider the following 472-residue polypeptide: MSKKSIGKIVRIIGPVVDVKFSEGELPDIYDALVVNNPQTGKKLILEVEQLIGDNTVRTVAMDSTDGLIRGMEVENTGEPIKAPVGRGILGRMINVIGEPIDENGELKDVEYWPIHRPAPSMAEQKTEIEILETGLKVIDLLAPFPKGGKIGFFGGAGVGKTVLVMEMIRNIAIEHKGFSMFAGVGERTREGNDLYLEMQEAGVLNNTVLVFGQMNEPPGARFRVALTALTVAEYFRDVEGRDVLLFIDNIFRFVQAGSEVSALLGRMPSAVGYQPTLATDMGELQERITSTKRGSITSVQAIYVPADDITDPAPATTFTHLDATIVLSRQLAALGLYPAVDPLDSTSKILDPNIVGKEHYEVARGVQEVLQRYKDLQDIIAILGMEELSEEDKLIVQRARKIQRFLTQPTHVAERFTGMPGVYVPIKETIRGFKEILEGRYDDLPEAAFYMVGTIDEAVEKAKKLTQAVVI.

155-162 (GGAGVGKT) contributes to the ATP binding site.

It belongs to the ATPase alpha/beta chains family. In terms of assembly, F-type ATPases have 2 components, CF(1) - the catalytic core - and CF(0) - the membrane proton channel. CF(1) has five subunits: alpha(3), beta(3), gamma(1), delta(1), epsilon(1). CF(0) has three main subunits: a(1), b(2) and c(9-12). The alpha and beta chains form an alternating ring which encloses part of the gamma chain. CF(1) is attached to CF(0) by a central stalk formed by the gamma and epsilon chains, while a peripheral stalk is formed by the delta and b chains.

It localises to the cell inner membrane. It catalyses the reaction ATP + H2O + 4 H(+)(in) = ADP + phosphate + 5 H(+)(out). Its function is as follows. Produces ATP from ADP in the presence of a proton gradient across the membrane. The catalytic sites are hosted primarily by the beta subunits. The protein is ATP synthase subunit beta of Fervidobacterium nodosum (strain ATCC 35602 / DSM 5306 / Rt17-B1).